Here is a 427-residue protein sequence, read N- to C-terminus: Enolase (427 aa).

Residue Gln163 coordinates (2R)-2-phosphoglycerate. Glu205 acts as the Proton donor in catalysis. Mg(2+) contacts are provided by Asp242, Glu285, and Asp312. Residues Lys337, Arg366, Ser367, and Lys388 each coordinate (2R)-2-phosphoglycerate. Lys337 serves as the catalytic Proton acceptor.

The protein belongs to the enolase family. It depends on Mg(2+) as a cofactor.

It localises to the cytoplasm. It is found in the secreted. The protein resides in the cell surface. It catalyses the reaction (2R)-2-phosphoglycerate = phosphoenolpyruvate + H2O. It functions in the pathway carbohydrate degradation; glycolysis; pyruvate from D-glyceraldehyde 3-phosphate: step 4/5. Functionally, catalyzes the reversible conversion of 2-phosphoglycerate (2-PG) into phosphoenolpyruvate (PEP). It is essential for the degradation of carbohydrates via glycolysis. This is Enolase from Laribacter hongkongensis (strain HLHK9).